A 343-amino-acid polypeptide reads, in one-letter code: Ferredoxin--NADP reductase (343 aa).

7 residues coordinate FAD: aspartate 31, lysine 39, tyrosine 43, valine 83, isoleucine 118, aspartate 285, and serine 326.

This sequence belongs to the ferredoxin--NADP reductase type 2 family. Homodimer. FAD is required as a cofactor.

It catalyses the reaction 2 reduced [2Fe-2S]-[ferredoxin] + NADP(+) + H(+) = 2 oxidized [2Fe-2S]-[ferredoxin] + NADPH. The chain is Ferredoxin--NADP reductase from Staphylococcus saprophyticus subsp. saprophyticus (strain ATCC 15305 / DSM 20229 / NCIMB 8711 / NCTC 7292 / S-41).